Reading from the N-terminus, the 155-residue chain is Mediator of RNA polymerase II transcription subunit 10 (155 aa).

The interval 54–80 is disordered; the sequence is SSHTQSHAPDADTAQANPSDPPISTIE.

It belongs to the Mediator complex subunit 10 family. As to quaternary structure, component of the Mediator complex.

The protein localises to the nucleus. Its function is as follows. Component of the Mediator complex, a coactivator involved in the regulated transcription of nearly all RNA polymerase II-dependent genes. Mediator functions as a bridge to convey information from gene-specific regulatory proteins to the basal RNA polymerase II transcription machinery. Mediator is recruited to promoters by direct interactions with regulatory proteins and serves as a scaffold for the assembly of a functional preinitiation complex with RNA polymerase II and the general transcription factors. The sequence is that of Mediator of RNA polymerase II transcription subunit 10 (nut2) from Aspergillus terreus (strain NIH 2624 / FGSC A1156).